Reading from the N-terminus, the 195-residue chain is CASP-like protein 1B2 (195 aa).

At 1 to 25 the chain is on the cytoplasmic side; that stretch reads MDLEKGKKPSEQAAACRIMQVKDKL. The helical transmembrane segment at 26–46 threads the bilayer; sequence ITLQPVVRACVFLATAVAAVI. Residues 47 to 78 are Extracellular-facing; that stretch reads MGLNKQSYTTVVAIVGTRPVTQTFTAKFKDTP. Residues 79 to 99 form a helical membrane-spanning segment; it reads AFVFFVIANAIASGYNLMVLV. Residues 100 to 114 lie on the Cytoplasmic side of the membrane; sequence TRRILQRRAQSLSVH. The helical transmembrane segment at 115 to 135 threads the bilayer; sequence LLDMVILTLLATGSATAASMA. Topologically, residues 136-160 are extracellular; it reads QLGKNGNLHARWNPICDKFGSFCNH. A helical membrane pass occupies residues 161–181; sequence GGIALVSSFIGVALMLALNLL. At 182-195 the chain is on the cytoplasmic side; the sequence is SAAANSPRSNVTGQ.

Belongs to the Casparian strip membrane proteins (CASP) family. In terms of assembly, homodimer and heterodimers.

The protein localises to the cell membrane. In Oryza sativa subsp. indica (Rice), this protein is CASP-like protein 1B2.